The following is a 1287-amino-acid chain: DNA-directed RNA polymerase subunit beta (1287 aa).

The protein belongs to the RNA polymerase beta chain family. In terms of assembly, the RNAP catalytic core consists of 2 alpha, 1 beta, 1 beta' and 1 omega subunit. When a sigma factor is associated with the core the holoenzyme is formed, which can initiate transcription.

The enzyme catalyses RNA(n) + a ribonucleoside 5'-triphosphate = RNA(n+1) + diphosphate. DNA-dependent RNA polymerase catalyzes the transcription of DNA into RNA using the four ribonucleoside triphosphates as substrates. In Mycoplasma capricolum subsp. capricolum (strain California kid / ATCC 27343 / NCTC 10154), this protein is DNA-directed RNA polymerase subunit beta.